The chain runs to 131 residues: Sulfurtransferase TusD (131 aa).

Residue C81 is the Cysteine persulfide intermediate of the active site.

The protein belongs to the DsrE/TusD family. In terms of assembly, heterohexamer, formed by a dimer of trimers. The hexameric TusBCD complex contains 2 copies each of TusB, TusC and TusD. The TusBCD complex interacts with TusE.

Its subcellular location is the cytoplasm. Part of a sulfur-relay system required for 2-thiolation of 5-methylaminomethyl-2-thiouridine (mnm(5)s(2)U) at tRNA wobble positions. Accepts sulfur from TusA and transfers it in turn to TusE. This chain is Sulfurtransferase TusD, found in Yersinia pseudotuberculosis serotype O:1b (strain IP 31758).